Reading from the N-terminus, the 186-residue chain is UPF0398 protein LBUL_0921 (186 aa).

This sequence belongs to the UPF0398 family.

The protein is UPF0398 protein LBUL_0921 of Lactobacillus delbrueckii subsp. bulgaricus (strain ATCC BAA-365 / Lb-18).